The primary structure comprises 253 residues: 3-deoxy-manno-octulosonate cytidylyltransferase (253 aa).

It belongs to the KdsB family.

The protein resides in the cytoplasm. It carries out the reaction 3-deoxy-alpha-D-manno-oct-2-ulosonate + CTP = CMP-3-deoxy-beta-D-manno-octulosonate + diphosphate. It participates in nucleotide-sugar biosynthesis; CMP-3-deoxy-D-manno-octulosonate biosynthesis; CMP-3-deoxy-D-manno-octulosonate from 3-deoxy-D-manno-octulosonate and CTP: step 1/1. It functions in the pathway bacterial outer membrane biogenesis; lipopolysaccharide biosynthesis. In terms of biological role, activates KDO (a required 8-carbon sugar) for incorporation into bacterial lipopolysaccharide in Gram-negative bacteria. This chain is 3-deoxy-manno-octulosonate cytidylyltransferase, found in Acidithiobacillus ferrooxidans (strain ATCC 23270 / DSM 14882 / CIP 104768 / NCIMB 8455) (Ferrobacillus ferrooxidans (strain ATCC 23270)).